Reading from the N-terminus, the 521-residue chain is Envelope glycoprotein C homolog (521 aa).

The signal sequence occupies residues 1–21 (MGPLGRAWLIAAIFAWALLSA). The Virion surface segment spans residues 22 to 475 (RRGLAEEAEA…DASPGLIGSP (454 aa)). Positions 24–138 (GLAEEAEASP…PSKAPPKERK (115 aa)) are disordered. A compositionally biased stretch (low complexity) spans 41 to 54 (PTETESSAGTTGAT). The span at 66 to 76 (EDSTPGATTPV) shows a compositional bias: polar residues. Residue Asn111 is glycosylated (N-linked (GlcNAc...) asparagine; by host). Cysteines 142 and 159 form a disulfide. The 73-residue stretch at 155 to 227 (LYVHCGVADN…LGDNYIFPSP (73 aa)) folds into the Ig-like V-type domain. 2 N-linked (GlcNAc...) asparagine; by host glycosylation sites follow: Asn164 and Asn208. 3 disulfides stabilise this stretch: Cys290–Cys351, Cys390–Cys447, and Cys394–Cys421. One can recognise an Ig-like C2-type domain in the interval 386–451 (GEAVCEARCV…PVDYTCTATG (66 aa)). The helical transmembrane segment at 476-496 (VLVSVVAVACGLGAVGLLLVA) threads the bilayer. Residues 497-521 (ASCLRRKARVIQPGLTRARALGSAP) are Cytoplasmic-facing.

This sequence belongs to the herpesviridae glycoprotein C family. Interacts with host complement component C3; this interaction inhibits host immune response by disregulating complement cascade.

Its subcellular location is the virion membrane. Essential for the initial attachment to heparan sulfate moieties of the host cell surface proteoglycans. Plays also a role in host immune evasion by inhibiting the host complement cascade activation. In Bovine herpesvirus 1.1 (strain Cooper) (BoHV-1), this protein is Envelope glycoprotein C homolog (gC).